Here is a 504-residue protein sequence, read N- to C-terminus: Sphingosine-1-phosphate transporter SPNS2 (504 aa).

Helical transmembrane passes span 48–70 (LLRCRTPLVAAGILSFGNVLNYM), 94–114 (GLLQTVFICSFMVAAPIFGYL), 122–142 (IILSCGIFFWSAVTLLSSFIT), 182–202 (VMLSVFYLAIPLGSGLGYILG), 214–234 (WALRVSPMLGLTAGTLILIFV), 269–289 (VFSSLASAAVSFATGAFGIWI), 317–337 (LIFGAITCVTGLLGVVIGAVT), 351–371 (LVCAVSMLGSAIFICLIFVVA), 375–395 (IVGAYICIFIGETLLFLNWAI), 415–435 (FQGFTSHLLGDAGSPYLIGLI), and 460–480 (LCPFVIVLGGMFFLATALFFL).

Belongs to the major facilitator superfamily. Spinster (TC 2.A.1.49) family.

The protein localises to the cell membrane. It is found in the endosome membrane. The catalysed reaction is sphing-4-enine 1-phosphate(in) = sphing-4-enine 1-phosphate(out). It catalyses the reaction sphinganine 1-phosphate(in) = sphinganine 1-phosphate(out). Lipid transporter that specifically mediates export of sphingosine-1-phosphate (sphing-4-enine 1-phosphate, S1P) and sphinganine-1-phosphate, which play critical roles in regulating heart development. Mediates the export of S1P from cells in the extraembryonic yolk syncytial layer (YSL), thereby regulating myocardial precursor migration. The chain is Sphingosine-1-phosphate transporter SPNS2 from Danio rerio (Zebrafish).